The primary structure comprises 854 residues: Translation initiation factor IF-2 (854 aa).

Basic residues predominate over residues Lys-61 to Lys-72. Disordered stretches follow at residues Lys-61–Ala-115 and Glu-167–Ser-186. Basic and acidic residues predominate over residues Lys-73 to Lys-108. Residues Thr-353–Glu-520 enclose the tr-type G domain. The interval Gly-362–Thr-369 is G1. Gly-362–Thr-369 lines the GTP pocket. Residues Gly-387–His-391 are G2. Residues Asp-408–Gly-411 form a G3 region. GTP is bound by residues Asp-408–His-412 and Asn-462–Asp-465. Residues Asn-462–Asp-465 form a G4 region. Positions Ser-498 to Lys-500 are G5.

Belongs to the TRAFAC class translation factor GTPase superfamily. Classic translation factor GTPase family. IF-2 subfamily.

The protein localises to the cytoplasm. Functionally, one of the essential components for the initiation of protein synthesis. Protects formylmethionyl-tRNA from spontaneous hydrolysis and promotes its binding to the 30S ribosomal subunits. Also involved in the hydrolysis of GTP during the formation of the 70S ribosomal complex. The sequence is that of Translation initiation factor IF-2 from Campylobacter jejuni subsp. doylei (strain ATCC BAA-1458 / RM4099 / 269.97).